Here is a 412-residue protein sequence, read N- to C-terminus: Chorismate synthase (412 aa).

NADP(+)-binding residues include Arg-40 and Arg-46. FMN-binding positions include 135 to 137, 256 to 257, Gly-300, 315 to 319, and Arg-341; these read RAS, QA, and KPIST. Positions 391 to 404 are enriched in basic and acidic residues; sequence QREPRQESSDEQPA. Residues 391–412 are disordered; sequence QREPRQESSDEQPARRAANTAG.

This sequence belongs to the chorismate synthase family. As to quaternary structure, homotetramer. FMNH2 is required as a cofactor.

It catalyses the reaction 5-O-(1-carboxyvinyl)-3-phosphoshikimate = chorismate + phosphate. It functions in the pathway metabolic intermediate biosynthesis; chorismate biosynthesis; chorismate from D-erythrose 4-phosphate and phosphoenolpyruvate: step 7/7. Functionally, catalyzes the anti-1,4-elimination of the C-3 phosphate and the C-6 proR hydrogen from 5-enolpyruvylshikimate-3-phosphate (EPSP) to yield chorismate, which is the branch point compound that serves as the starting substrate for the three terminal pathways of aromatic amino acid biosynthesis. This reaction introduces a second double bond into the aromatic ring system. The chain is Chorismate synthase from Mycobacteroides abscessus (strain ATCC 19977 / DSM 44196 / CCUG 20993 / CIP 104536 / JCM 13569 / NCTC 13031 / TMC 1543 / L948) (Mycobacterium abscessus).